Consider the following 246-residue polypeptide: Probable septum site-determining protein MinC (246 aa).

A disordered region spans residues 116 to 140 (AAVSPPPPPPARAEPAPPAARPAPG). A compositionally biased stretch (pro residues) spans 119–136 (SPPPPPPARAEPAPPAAR).

It belongs to the MinC family. Interacts with MinD and FtsZ.

Its function is as follows. Cell division inhibitor that blocks the formation of polar Z ring septums. Rapidly oscillates between the poles of the cell to destabilize FtsZ filaments that have formed before they mature into polar Z rings. Prevents FtsZ polymerization. This Xanthomonas oryzae pv. oryzae (strain MAFF 311018) protein is Probable septum site-determining protein MinC.